The following is an 865-amino-acid chain: High affinity cAMP-specific and IBMX-insensitive 3',5'-cyclic phosphodiesterase 8B (865 aa).

2 disordered regions span residues 17-40 (CRDS…TAPL) and 52-92 (AMPP…TCRG). Residues 23–36 (SNSPRQTSSVSQGP) show a composition bias toward polar residues. Residues 75 to 90 (GSGSSTGSSGPATTTC) show a composition bias toward low complexity. Positions 247–318 (ACNSVFTALD…DTINTCIKKG (72 aa)) constitute a PAS domain. The interval 373 to 415 (IHRDSGDNSQTEPHSFRHKSRRKESIDVKSISSRGSDAPSLQN) is disordered. Residues 402–415 (SISSRGSDAPSLQN) show a composition bias toward polar residues. The residue at position 497 (Ser-497) is a Phosphoserine. Residues 519-855 (TINDVPPSIA…KHWKTLDDLK (337 aa)) enclose the PDEase domain. The active-site Proton donor is His-595. A divalent metal cation is bound by residues His-599, His-635, and Asp-636. Phosphoserine occurs at positions 731 and 734. Asp-761 contacts a divalent metal cation.

Belongs to the cyclic nucleotide phosphodiesterase family. PDE8 subfamily. The cofactor is a divalent metal cation. Widely expressed.

The enzyme catalyses 3',5'-cyclic AMP + H2O = AMP + H(+). Its pathway is purine metabolism; 3',5'-cyclic AMP degradation; AMP from 3',5'-cyclic AMP: step 1/1. Hydrolyzes the second messenger cAMP, which is a key regulator of many important physiological processes. May be involved in specific signaling in the thyroid gland. The protein is High affinity cAMP-specific and IBMX-insensitive 3',5'-cyclic phosphodiesterase 8B (Pde8b) of Mus musculus (Mouse).